Consider the following 152-residue polypeptide: Ribosome maturation factor RimP (152 aa).

This sequence belongs to the RimP family.

It is found in the cytoplasm. Functionally, required for maturation of 30S ribosomal subunits. This Photorhabdus laumondii subsp. laumondii (strain DSM 15139 / CIP 105565 / TT01) (Photorhabdus luminescens subsp. laumondii) protein is Ribosome maturation factor RimP.